The primary structure comprises 440 residues: Transposon Ty1-ER2 Gag polyprotein (440 aa).

Polar residues-rich tracts occupy residues 1–10 (MESQQLSNYP), 48–60 (TKANSQQTTTPAS), and 127–152 (QSQFPQYPSSVGTPLSTPSPESGNTF). Disordered regions lie at residues 1 to 93 (MESQ…MMTQ), 126 to 173 (PQSQ…RPPP), and 352 to 440 (GSRN…PETY). The segment covering 153-165 (TDSSSADSDMTST) has biased composition (low complexity). Residues 299-401 (NNGIHINNKV…NSKSKTARAH (103 aa)) form an RNA-binding region. A compositionally biased stretch (low complexity) spans 402–418 (NVSTSNNSPSTDNDSIS). At Ser416 the chain carries Phosphoserine. Polar residues predominate over residues 419 to 428 (KSTTEPIQLN). Residues 429–440 (NKHDLHLRPETY) are compositionally biased toward basic and acidic residues.

Homotrimer.

It is found in the cytoplasm. Capsid protein (CA) is the structural component of the virus-like particle (VLP), forming the shell that encapsulates the retrotransposons dimeric RNA genome. The particles are assembled from trimer-clustered units and there are holes in the capsid shells that allow for the diffusion of macromolecules. CA also has nucleocapsid-like chaperone activity, promoting primer tRNA(i)-Met annealing to the multipartite primer-binding site (PBS), dimerization of Ty1 RNA and initiation of reverse transcription. The sequence is that of Transposon Ty1-ER2 Gag polyprotein (TY1A-ER2) from Saccharomyces cerevisiae (strain ATCC 204508 / S288c) (Baker's yeast).